Here is a 375-residue protein sequence, read N- to C-terminus: Chaperone protein DnaJ (375 aa).

The 66-residue stretch at 5-70 (DYYEVLGVER…SKRAAFDQYG (66 aa)) folds into the J domain. The CR-type zinc finger occupies 134-212 (GTTVSIRVPT…CHGEGRVEEY (79 aa)). Positions 147, 150, 164, 167, 186, 189, 200, and 203 each coordinate Zn(2+). CXXCXGXG motif repeat units lie at residues 147-154 (CQPCDGSG), 164-171 (CPTCGGIG), 186-193 (CPRCHGQG), and 200-207 (CTSCHGEG).

Belongs to the DnaJ family. In terms of assembly, homodimer. The cofactor is Zn(2+).

It localises to the cytoplasm. Its function is as follows. Participates actively in the response to hyperosmotic and heat shock by preventing the aggregation of stress-denatured proteins and by disaggregating proteins, also in an autonomous, DnaK-independent fashion. Unfolded proteins bind initially to DnaJ; upon interaction with the DnaJ-bound protein, DnaK hydrolyzes its bound ATP, resulting in the formation of a stable complex. GrpE releases ADP from DnaK; ATP binding to DnaK triggers the release of the substrate protein, thus completing the reaction cycle. Several rounds of ATP-dependent interactions between DnaJ, DnaK and GrpE are required for fully efficient folding. Also involved, together with DnaK and GrpE, in the DNA replication of plasmids through activation of initiation proteins. The protein is Chaperone protein DnaJ of Pseudomonas putida (strain ATCC 47054 / DSM 6125 / CFBP 8728 / NCIMB 11950 / KT2440).